The sequence spans 753 residues: Oligopeptide transporter 5 (753 aa).

15 helical membrane-spanning segments follow: residues 56 to 76 (TWFL…FFGY), 80 to 100 (PLTV…KLMA), 132 to 152 (ITIF…LTIV), 163 to 183 (AAAM…AGMF), 224 to 244 (FFLI…YLFP), 296 to 316 (FFAI…ILPI), 368 to 388 (YLSI…TATI), 432 to 452 (WWFV…CEGF), 461 to 481 (WGLL…GVIL), 506 to 528 (PLAN…YFVG), 544 to 564 (FIVQ…TTWW), 583 to 603 (PWTC…GIIG), 615 to 635 (PGMN…WFFA), 662 to 682 (AKAV…YYIF), and 695 to 715 (ILSA…YFAL).

The protein belongs to the oligopeptide OPT transporter (TC 2.A.67.1) family. In terms of tissue distribution, expressed predominantly in flowers, and at a very low level in leaves and roots.

It localises to the membrane. Its function is as follows. Involved in the translocation of tetra- and pentapeptides across the cellular membrane in an energy-dependent manner. In Arabidopsis thaliana (Mouse-ear cress), this protein is Oligopeptide transporter 5 (OPT5).